We begin with the raw amino-acid sequence, 424 residues long: Serine hydroxymethyltransferase 2 (424 aa).

(6S)-5,6,7,8-tetrahydrofolate is bound by residues leucine 125 and 129-131 (GHL). Residue lysine 234 is modified to N6-(pyridoxal phosphate)lysine. Glutamate 250 contributes to the (6S)-5,6,7,8-tetrahydrofolate binding site.

The protein belongs to the SHMT family. Homodimer. Requires pyridoxal 5'-phosphate as cofactor.

Its subcellular location is the cytoplasm. The catalysed reaction is (6R)-5,10-methylene-5,6,7,8-tetrahydrofolate + glycine + H2O = (6S)-5,6,7,8-tetrahydrofolate + L-serine. It functions in the pathway one-carbon metabolism; tetrahydrofolate interconversion. The protein operates within amino-acid biosynthesis; glycine biosynthesis; glycine from L-serine: step 1/1. Functionally, catalyzes the reversible interconversion of serine and glycine with tetrahydrofolate (THF) serving as the one-carbon carrier. This reaction serves as the major source of one-carbon groups required for the biosynthesis of purines, thymidylate, methionine, and other important biomolecules. Also exhibits THF-independent aldolase activity toward beta-hydroxyamino acids, producing glycine and aldehydes, via a retro-aldol mechanism. The sequence is that of Serine hydroxymethyltransferase 2 from Burkholderia pseudomallei (strain 1710b).